Consider the following 106-residue polypeptide: Cytochrome c oxidase assembly factor 3 homolog, mitochondrial (106 aa).

A disordered region spans residues 1–28 (MASSGSGDPLDSKRGEAPFAQRIDPTRE). An N-acetylalanine modification is found at Ala2. Residues 2 to 57 (ASSGSGDPLDSKRGEAPFAQRIDPTREKLTPEQLHFMRQAQLAQWQKVLPRRRTRN) are Mitochondrial matrix-facing. A helical membrane pass occupies residues 58 to 80 (IVTGLGIGALVLAIHGYTFYSIS). Residues 78–104 (SISQERFLDELEDEAKAARARALARAS) are a coiled coil. The Mitochondrial intermembrane segment spans residues 81 to 106 (QERFLDELEDEAKAARARALARASGS).

Belongs to the COA3 family. In terms of assembly, along with COX14, core component of the MITRAC (mitochondrial translation regulation assembly intermediate of cytochrome c oxidase complex) complex. Interacts with MT-CO1/COX1, SMIM20, SURF1 and TIMM21.

Its subcellular location is the mitochondrion inner membrane. Core component of the MITRAC (mitochondrial translation regulation assembly intermediate of cytochrome c oxidase complex) complex, that regulates cytochrome c oxidase assembly. MITRAC complexes regulate both translation of mitochondrial encoded components and assembly of nuclear-encoded components imported in mitochondrion. Required for efficient translation of MT-CO1 and mitochondrial respiratory chain complex IV assembly. The chain is Cytochrome c oxidase assembly factor 3 homolog, mitochondrial (COA3) from Pongo abelii (Sumatran orangutan).